A 220-amino-acid polypeptide reads, in one-letter code: Glutathione peroxidase (220 aa).

The active site involves Sec64. Residue Sec64 is a non-standard amino acid, selenocysteine.

This sequence belongs to the glutathione peroxidase family. During periods of oxidative stress, Sec-64 may react with a superoxide radical, irreversibly lose hydroselenide and be converted to dehydroalanine.

It carries out the reaction 2 glutathione + H2O2 = glutathione disulfide + 2 H2O. In terms of biological role, may protect the virus and component of infected cells from oxidative damage by peroxides whose formation may be stimulated by infection. In Homo sapiens (Human), this protein is Glutathione peroxidase (GPX1).